The following is a 194-amino-acid chain: MITMRRSMKTRETLETHVKVDLEIDGSGKSSVNTGLGFLDHMLESVARHGLLDLEVEARGDLEVDDHHTVEDVALTLGEALREALGDKSGIRRMAHAMVPMDDALATVALDLSGRPYTVLELEFDDAVIGDVKSQNIGHFIESLAVSAAMNIHASVRGRNDHHKAEALFKALALAIRDAVRVEHGEIPSTKGKL.

It belongs to the imidazoleglycerol-phosphate dehydratase family.

The protein localises to the cytoplasm. It carries out the reaction D-erythro-1-(imidazol-4-yl)glycerol 3-phosphate = 3-(imidazol-4-yl)-2-oxopropyl phosphate + H2O. It participates in amino-acid biosynthesis; L-histidine biosynthesis; L-histidine from 5-phospho-alpha-D-ribose 1-diphosphate: step 6/9. In Methanothermobacter thermautotrophicus (strain ATCC 29096 / DSM 1053 / JCM 10044 / NBRC 100330 / Delta H) (Methanobacterium thermoautotrophicum), this protein is Imidazoleglycerol-phosphate dehydratase.